Reading from the N-terminus, the 357-residue chain is Actin, cytoplasmic (357 aa).

It belongs to the actin family. Post-translationally, met-1 may be removed after translation.

It localises to the cytoplasm. Its subcellular location is the cytoskeleton. It carries out the reaction ATP + H2O = ADP + phosphate + H(+). Actins are highly conserved proteins that are involved in various types of cell motility and are ubiquitously expressed in all eukaryotic cells. This Oxytricha fallax protein is Actin, cytoplasmic.